The following is a 633-amino-acid chain: Glutamyl-tRNA(Gln) amidotransferase subunit E (633 aa).

It belongs to the GatB/GatE family. GatE subfamily. In terms of assembly, heterodimer of GatD and GatE.

The catalysed reaction is L-glutamyl-tRNA(Gln) + L-glutamine + ATP + H2O = L-glutaminyl-tRNA(Gln) + L-glutamate + ADP + phosphate + H(+). Functionally, allows the formation of correctly charged Gln-tRNA(Gln) through the transamidation of misacylated Glu-tRNA(Gln) in organisms which lack glutaminyl-tRNA synthetase. The reaction takes place in the presence of glutamine and ATP through an activated gamma-phospho-Glu-tRNA(Gln). The GatDE system is specific for glutamate and does not act on aspartate. The chain is Glutamyl-tRNA(Gln) amidotransferase subunit E from Saccharolobus islandicus (strain L.S.2.15 / Lassen #1) (Sulfolobus islandicus).